The following is a 104-amino-acid chain: Chromogranin-A (104 aa).

The cysteines at positions 17 and 38 are disulfide-linked.

This sequence belongs to the chromogranin/secretogranin protein family. Dimer.

Its subcellular location is the cytoplasmic vesicle. The protein resides in the secretory vesicle. It is found in the secreted. Its function is as follows. Chromogranin A probably has a paracrine role in the regulation of secretion or maturation. This is Chromogranin-A (CHGA) from Struthio camelus (Common ostrich).